Reading from the N-terminus, the 409-residue chain is Histone deacetylase 7 (409 aa).

The interval Arg11–Gly324 is histone deacetylase. Catalysis depends on His148, which acts as the Proton donor/acceptor. Asp267 provides a ligand contact to Zn(2+). Residues Pro383–Ile409 form a disordered region. The span at Phe384–Thr394 shows a compositional bias: polar residues. The segment covering Asp400–Ile409 has biased composition (basic and acidic residues).

It belongs to the histone deacetylase family. HD type 1 subfamily. The cofactor is Zn(2+). Low expression in flowers.

Its subcellular location is the nucleus. It carries out the reaction N(6)-acetyl-L-lysyl-[histone] + H2O = L-lysyl-[histone] + acetate. Responsible for the deacetylation of lysine residues on the N-terminal part of the core histones (H2A, H2B, H3 and H4). Histone deacetylation gives a tag for epigenetic repression and plays an important role in transcriptional regulation, cell cycle progression and developmental events. May be involved in flowering induction. Histone deacetylases act via the formation of large multiprotein complexes. This is Histone deacetylase 7 (HDA7) from Arabidopsis thaliana (Mouse-ear cress).